The primary structure comprises 499 residues: MTYKDLRNFIKTLEYQGELKKIDFPVDPNLEITEIAHRTLKSQGPALLFTNPIGHSIPILCNLFGTISRIELGIGIKNILSLRDIGKLLAFLKEPQIPTGFRDFLSKIPNFRQILNMPIKHVSNAVCQENIWNNAQDIDITQMPIMKSWPGDISIAITWGITITQGFTNKRQNLGIYRHQVLSKNKIIIRWLAHRGGALDFQEWYTHSSEKKFPIAIALGADPATLIGAAIPIPNTLSEYAFSGLLRGSKTAVTKCISSNLYVPAYSEIILEGYINRDDIAVEGPFGDHTGYYNSTEKFPVCTITHITHRNNPIYHSTYTGRPPDEPSILGMAMNELFIPIIQKQFPEIIDFYLPPEGCSYRLAIVTIKKQFLGHAKKIIFGVWSCLNQFMYTKFILVCDDDINARDWKDVIWAISTRMDPARDIIIAENTPIDYLDFSSPISGLGSKMGIDATNKWPGETQRTWGKPIQMNNSIQSRINDIWDQLHIPCNEKPFKHKN.

Asparagine 173 lines the Mn(2+) pocket. Prenylated FMN-binding positions include 176 to 178 (IYR), 190 to 192 (RWL), and 195 to 196 (RG). Position 239 (glutamate 239) interacts with Mn(2+). Aspartate 288 serves as the catalytic Proton donor.

This sequence belongs to the UbiD family. In terms of assembly, homohexamer. The cofactor is prenylated FMN. Mn(2+) is required as a cofactor.

Its subcellular location is the cell membrane. The catalysed reaction is a 4-hydroxy-3-(all-trans-polyprenyl)benzoate + H(+) = a 2-(all-trans-polyprenyl)phenol + CO2. It participates in cofactor biosynthesis; ubiquinone biosynthesis. In terms of biological role, catalyzes the decarboxylation of 3-octaprenyl-4-hydroxy benzoate to 2-octaprenylphenol, an intermediate step in ubiquinone biosynthesis. In Blochmanniella floridana, this protein is 3-octaprenyl-4-hydroxybenzoate carboxy-lyase.